The chain runs to 283 residues: MANFKGHALPGTFFLLFGLWWSIKCPFRQILRRKERQVGDRERQKLTALFNRIDLIEGSLKIFFAFVGIMAEQFVPDGPHAHLYQDGWVKLMNWQHSTMYLFYGISGIADVLSVSSHHVPVGLDRLFLSLALFVEGFLFYFHIHNREPLDQHIHSLLLFAVFGGSASTMMEVFKRENAVLELLRCTLAILQGTWFYQIGFVLYPLSGPEWDLTRHDNIMFITMCFCWHLAVALLIVGICYCGVFWTSKWCERRQRGDMEMGLRKSTSTDSSSQKALLQESDEE.

Helical transmembrane passes span 7–27 (HALP…KCPF), 55–75 (LIEG…EQFV), 99–119 (MYLF…SHHV), 121–141 (VGLD…LFYF), 153–173 (IHSL…MEVF), 187–207 (LAIL…PLSG), and 218–238 (IMFI…IVGI). The segment at 261 to 283 (GLRKSTSTDSSSQKALLQESDEE) is disordered. The span at 264–275 (KSTSTDSSSQKA) shows a compositional bias: polar residues.

It belongs to the TMEM45 family.

The protein localises to the membrane. This chain is Transmembrane protein 45B (tmem45b), found in Danio rerio (Zebrafish).